Reading from the N-terminus, the 493-residue chain is Dipeptide permease D (493 aa).

Residues 1–13 lie on the Cytoplasmic side of the membrane; that stretch reads MNKHASQPRAIYY. The chain crosses the membrane as a helical span at residues 14–34; that stretch reads VVALQIWEYFSFYGMRALLIL. Over 35–48 the chain is Periplasmic; sequence YLTNQLKYNDTHAY. Residues 49 to 69 traverse the membrane as a helical segment; the sequence is ELFSAYCSLVYVTPILGGFLA. The Cytoplasmic segment spans residues 70–77; that stretch reads DKVLGNRM. A helical transmembrane segment spans residues 78 to 98; the sequence is AVMLGALLMAIGHVVLGASEI. The Periplasmic portion of the chain corresponds to 99–100; the sequence is HP. Residues 101–121 form a helical membrane-spanning segment; that stretch reads SFLYLSLAIIVCGYGLFKSNV. The Cytoplasmic segment spans residues 122–137; that stretch reads SCLLGELYEPTDPRRD. A helical transmembrane segment spans residues 138-158; sequence GGFSLMYAAGNVGSIIAPIAC. At 159–166 the chain is on the periplasmic side; the sequence is GYAQEEYS. Residues 167-187 traverse the membrane as a helical segment; sequence WAMGFGLAAVGMIAGLVIFLC. The Cytoplasmic segment spans residues 188 to 211; the sequence is GNRHFTHTRGVNKKVLRATNFLLP. The chain crosses the membrane as a helical span at residues 212-232; the sequence is NWGWLLVLLVATPALITILFW. The Periplasmic segment spans residues 233–234; sequence KE. Residues 235–255 traverse the membrane as a helical segment; it reads WSVYALIVATIIGLGVLAKIY. Residues 256 to 266 lie on the Cytoplasmic side of the membrane; the sequence is RKAENQKQRKE. The chain crosses the membrane as a helical span at residues 267 to 287; that stretch reads LGLIVTLTFFSMLFWAFAQQG. The Periplasmic portion of the chain corresponds to 288-311; that stretch reads GSSISLYIDRFVNRDMFGYTVPTA. Residues 312 to 332 traverse the membrane as a helical segment; sequence MFQSINAFAVMLCGVFLAWVV. Topologically, residues 333 to 343 are cytoplasmic; that stretch reads KESVAGNRTVR. A helical transmembrane segment spans residues 344 to 364; the sequence is IWGKFALGLGLMSAGFCILTL. At 365 to 378 the chain is on the periplasmic side; it reads SARWSAMYGHSSLP. Residues 379-399 traverse the membrane as a helical segment; the sequence is LMVLGLAVMGFAELFIDPVAM. At 400-412 the chain is on the cytoplasmic side; the sequence is SQITRIEIPGVTG. Residues 413-433 form a helical membrane-spanning segment; the sequence is VLTGIYMLLSGAIANYLAGVI. The Periplasmic segment spans residues 434–461; it reads ADQTSQASFDASGAINYSINAYIEVFDQ. Residues 462 to 482 form a helical membrane-spanning segment; it reads ITWGALACVGLVLMIWLYQAL. The Cytoplasmic segment spans residues 483 to 493; that stretch reads KFRNRALALES.

This sequence belongs to the major facilitator superfamily. Proton-dependent oligopeptide transporter (POT/PTR) (TC 2.A.17) family. DtpD subfamily.

It is found in the cell inner membrane. Functionally, probable proton-dependent permease that transports dipeptides. The protein is Dipeptide permease D (dtpD) of Escherichia coli (strain K12).